Reading from the N-terminus, the 661-residue chain is Pseudouridylate synthase 7 homolog (661 aa).

Position 1 is an N-acetylmethionine (Met1). Positions 1–97 are disordered; the sequence is MEMTEMTGVS…GLSEECEEEE (97 aa). Ser10 carries the post-translational modification Phosphoserine. The segment covering 36–52 has biased composition (polar residues); the sequence is SECSLTKGQDGLQNDFL. A compositionally biased stretch (acidic residues) spans 77–97; that stretch reads QLEDEEEEEEDGLSEECEEEE. Ser127 bears the Phosphoserine mark. The Nucleophile role is filled by Asp294. Residues 370-580 form the TRUD domain; sequence GFINYYGMQR…SGAYRKIIIR (211 aa). A Phosphothreonine modification is found at Thr610.

It belongs to the pseudouridine synthase TruD family. As to quaternary structure, interacts with SIRT1.

Its subcellular location is the nucleus. It catalyses the reaction a uridine in tRNA = a pseudouridine in tRNA. The catalysed reaction is uridine(13) in tRNA = pseudouridine(13) in tRNA. It carries out the reaction a uridine in mRNA = a pseudouridine in mRNA. Pseudouridylate synthase that catalyzes pseudouridylation of RNAs. Acts as a regulator of protein synthesis in embryonic stem cells by mediating pseudouridylation of RNA fragments derived from tRNAs (tRFs): pseudouridylated tRFs inhibit translation by targeting the translation initiation complex. Also catalyzes pseudouridylation of mRNAs: mediates pseudouridylation of mRNAs with the consensus sequence 5'-UGUAG-3'. Acts as a regulator of pre-mRNA splicing by mediating pseudouridylation of pre-mRNAs at locations associated with alternatively spliced regions. Pseudouridylation of pre-mRNAs near splice sites directly regulates mRNA splicing and mRNA 3'-end processing. In addition to mRNAs and tRNAs, binds other types of RNAs, such as snRNAs, Y RNAs and vault RNAs, suggesting that it can catalyze pseudouridylation of many RNA types. The sequence is that of Pseudouridylate synthase 7 homolog from Homo sapiens (Human).